The following is a 142-amino-acid chain: MKIEQTLSIIKPNIISNNFIGNIINRLEQAKLYIIASKMIKLSWKEAVSFYIEHKNKSFFSDLINFMISHPIIVQILEGENAIKRNREIMGNTNPKIALAGTLRSDFSNDIIKNGVHGSDSEESADREIKFFFKKDRIFSRI.

Lys-11, Phe-59, Arg-87, Thr-93, Arg-104, and Asn-114 together coordinate ATP. His-117 functions as the Pros-phosphohistidine intermediate in the catalytic mechanism.

Belongs to the NDK family. As to quaternary structure, homotetramer. Requires Mg(2+) as cofactor.

The protein localises to the cytoplasm. It carries out the reaction a 2'-deoxyribonucleoside 5'-diphosphate + ATP = a 2'-deoxyribonucleoside 5'-triphosphate + ADP. The catalysed reaction is a ribonucleoside 5'-diphosphate + ATP = a ribonucleoside 5'-triphosphate + ADP. In terms of biological role, major role in the synthesis of nucleoside triphosphates other than ATP. The ATP gamma phosphate is transferred to the NDP beta phosphate via a ping-pong mechanism, using a phosphorylated active-site intermediate. This is Nucleoside diphosphate kinase from Wigglesworthia glossinidia brevipalpis.